Here is an 873-residue protein sequence, read N- to C-terminus: Alanine--tRNA ligase (873 aa).

Residues H562, H566, C663, and H667 each contribute to the Zn(2+) site.

It belongs to the class-II aminoacyl-tRNA synthetase family. The cofactor is Zn(2+).

It is found in the cytoplasm. The catalysed reaction is tRNA(Ala) + L-alanine + ATP = L-alanyl-tRNA(Ala) + AMP + diphosphate. Its function is as follows. Catalyzes the attachment of alanine to tRNA(Ala) in a two-step reaction: alanine is first activated by ATP to form Ala-AMP and then transferred to the acceptor end of tRNA(Ala). Also edits incorrectly charged Ser-tRNA(Ala) and Gly-tRNA(Ala) via its editing domain. The sequence is that of Alanine--tRNA ligase from Bordetella avium (strain 197N).